The following is a 946-amino-acid chain: Bifunctional glutamine synthetase adenylyltransferase/adenylyl-removing enzyme (946 aa).

The tract at residues 1-440 is adenylyl removase; that stretch reads MKPLSSPLQQ…VFNELIGDDE (440 aa). An adenylyl transferase region spans residues 449 to 946; the sequence is SEHWRELWQD…ASWQKWLVAG (498 aa).

This sequence belongs to the GlnE family. The cofactor is Mg(2+).

It catalyses the reaction [glutamine synthetase]-O(4)-(5'-adenylyl)-L-tyrosine + phosphate = [glutamine synthetase]-L-tyrosine + ADP. The enzyme catalyses [glutamine synthetase]-L-tyrosine + ATP = [glutamine synthetase]-O(4)-(5'-adenylyl)-L-tyrosine + diphosphate. Involved in the regulation of glutamine synthetase GlnA, a key enzyme in the process to assimilate ammonia. When cellular nitrogen levels are high, the C-terminal adenylyl transferase (AT) inactivates GlnA by covalent transfer of an adenylyl group from ATP to specific tyrosine residue of GlnA, thus reducing its activity. Conversely, when nitrogen levels are low, the N-terminal adenylyl removase (AR) activates GlnA by removing the adenylyl group by phosphorolysis, increasing its activity. The regulatory region of GlnE binds the signal transduction protein PII (GlnB) which indicates the nitrogen status of the cell. In Citrobacter koseri (strain ATCC BAA-895 / CDC 4225-83 / SGSC4696), this protein is Bifunctional glutamine synthetase adenylyltransferase/adenylyl-removing enzyme.